Consider the following 212-residue polypeptide: MNDAALAPDVSAALERGLQAQSLDAAFAAPLLRYLALLVRWNKTYNLTAVRDPREMVTRHLLDSLAMQPYIASGTLADLGTGPGLPGIPLAITRPQLQVTLVESNGKKARFMREALRHLELGNARVAESRAEALDEPAAYDHLTARALDTLAGIIAVGGHLLRPGGSLLAMKGVYPHEEIAALPAGWTVGEVHPLQVPGLEGERHLVVVRKG.

S-adenosyl-L-methionine is bound by residues G80, L85, 131-132 (AE), and R146.

It belongs to the methyltransferase superfamily. RNA methyltransferase RsmG family.

It is found in the cytoplasm. The catalysed reaction is guanosine(527) in 16S rRNA + S-adenosyl-L-methionine = N(7)-methylguanosine(527) in 16S rRNA + S-adenosyl-L-homocysteine. Specifically methylates the N7 position of guanine in position 527 of 16S rRNA. The sequence is that of Ribosomal RNA small subunit methyltransferase G from Xanthomonas euvesicatoria pv. vesicatoria (strain 85-10) (Xanthomonas campestris pv. vesicatoria).